We begin with the raw amino-acid sequence, 208 residues long: Holliday junction resolvase RecU (208 aa).

Mg(2+) is bound by residues T87, D89, E102, and Q121.

It belongs to the RecU family. The cofactor is Mg(2+).

Its subcellular location is the cytoplasm. It carries out the reaction Endonucleolytic cleavage at a junction such as a reciprocal single-stranded crossover between two homologous DNA duplexes (Holliday junction).. Endonuclease that resolves Holliday junction intermediates in genetic recombination. Cleaves mobile four-strand junctions by introducing symmetrical nicks in paired strands. Promotes annealing of linear ssDNA with homologous dsDNA. Required for DNA repair, homologous recombination and chromosome segregation. The polypeptide is Holliday junction resolvase RecU (Staphylococcus aureus (strain MRSA252)).